We begin with the raw amino-acid sequence, 447 residues long: Putative metabolite transport protein HI_0418 (447 aa).

The Cytoplasmic portion of the chain corresponds to Met1 to Met28. The chain crosses the membrane as a helical span at residues Val29–Phe49. At Asn50–Gln63 the chain is on the periplasmic side. The helical transmembrane segment at Ile64 to Phe84 threads the bilayer. Residues Gly85 to Thr96 are Cytoplasmic-facing. A helical membrane pass occupies residues Phe97–Tyr117. The Periplasmic segment spans residues Asp118–Ser119. The chain crosses the membrane as a helical span at residues Ile120–Gly140. Topologically, residues Gly141–Gln167 are cytoplasmic. The chain crosses the membrane as a helical span at residues Leu168–Phe188. The Periplasmic portion of the chain corresponds to Gly189 to Thr194. A helical membrane pass occupies residues Glu195–Val215. The Cytoplasmic portion of the chain corresponds to Arg216–Pro249. The chain crosses the membrane as a helical span at residues Phe250–Phe270. Topologically, residues Ser271 to Gln295 are periplasmic. The chain crosses the membrane as a helical span at residues Ile296–Gly316. Over Lys317–Arg325 the chain is Cytoplasmic. The chain crosses the membrane as a helical span at residues Thr326–Leu346. Residues Glu347 to Leu354 lie on the Periplasmic side of the membrane. The chain crosses the membrane as a helical span at residues Phe355–Phe375. The Cytoplasmic portion of the chain corresponds to Leu376–Ser390. Residues Leu391–Leu411 traverse the membrane as a helical segment. The Periplasmic segment spans residues Asn412–Lys418. The chain crosses the membrane as a helical span at residues Gly419–Ser439. The Cytoplasmic segment spans residues Glu440–Ser447.

Belongs to the major facilitator superfamily. Metabolite:H+ Symporter (MHS) family (TC 2.A.1.6) family.

It localises to the cell inner membrane. This is Putative metabolite transport protein HI_0418 from Haemophilus influenzae (strain ATCC 51907 / DSM 11121 / KW20 / Rd).